A 506-amino-acid chain; its full sequence is Trans-cinnamate 4-monooxygenase (506 aa).

The helical transmembrane segment at D3–T23 threads the bilayer. (E)-cinnamate is bound by residues R214–Q219 and A307. Position 448 (C448) interacts with heme.

The protein belongs to the cytochrome P450 family. Requires heme as cofactor.

It is found in the membrane. The enzyme catalyses (E)-cinnamate + reduced [NADPH--hemoprotein reductase] + O2 = (E)-4-coumarate + oxidized [NADPH--hemoprotein reductase] + H2O + H(+). Its pathway is phenylpropanoid metabolism; trans-4-coumarate biosynthesis; trans-4-coumarate from trans-cinnamate: step 1/1. Its function is as follows. Catalyzes the first oxidative step of the phenylpropanoid pathway in higher plants by transforming trans-cinnamate into p-coumarate. The compounds formed by this pathway are essential components for lignification, pollination, and defense against ultraviolet light, predators and pathogens. This chain is Trans-cinnamate 4-monooxygenase (CYP73A10), found in Petroselinum crispum (Parsley).